A 418-amino-acid chain; its full sequence is Intracellular coagulation inhibitor 1 (418 aa).

An N-terminal signal peptide occupies residues 1–24 (MKLGDWKFCLLLFQLMFLTNVCLS). N-linked (GlcNAc...) asparagine glycans are attached at residues Asn-49 and Asn-404.

Belongs to the serpin family. Monomer. Forms a covalent heterodimer with clotting factor C. Interacts with big defensin. N-glycosylated. Expressed in hemocytes (at protein level).

Its subcellular location is the secreted. In terms of biological role, serine protease inhibitor that specifically inhibits clotting factor C. Does not inhibit clotting factor B or proclotting enzyme. This chain is Intracellular coagulation inhibitor 1, found in Tachypleus tridentatus (Japanese horseshoe crab).